A 448-amino-acid chain; its full sequence is Exodeoxyribonuclease 7 large subunit (448 aa).

The protein belongs to the XseA family. As to quaternary structure, heterooligomer composed of large and small subunits.

It localises to the cytoplasm. The enzyme catalyses Exonucleolytic cleavage in either 5'- to 3'- or 3'- to 5'-direction to yield nucleoside 5'-phosphates.. Functionally, bidirectionally degrades single-stranded DNA into large acid-insoluble oligonucleotides, which are then degraded further into small acid-soluble oligonucleotides. In Tolumonas auensis (strain DSM 9187 / NBRC 110442 / TA 4), this protein is Exodeoxyribonuclease 7 large subunit.